A 466-amino-acid chain; its full sequence is tRNA-2-methylthio-N(6)-dimethylallyladenosine synthase (466 aa).

One can recognise an MTTase N-terminal domain in the interval 2-118; sequence KRFYIHTIGC…LPGHIQAVAH (117 aa). Residues Cys11, Cys47, Cys81, Cys157, Cys161, and Cys164 each contribute to the [4Fe-4S] cluster site. The 230-residue stretch at 143-372 folds into the Radical SAM core domain; it reads DSSGVTGFIT…LELQNRITAE (230 aa). The TRAM domain maps to 375-453; it reads RALEGRVEQV…AHSLSGIAVG (79 aa).

This sequence belongs to the methylthiotransferase family. MiaB subfamily. In terms of assembly, monomer. The cofactor is [4Fe-4S] cluster.

The protein localises to the cytoplasm. It catalyses the reaction N(6)-dimethylallyladenosine(37) in tRNA + (sulfur carrier)-SH + AH2 + 2 S-adenosyl-L-methionine = 2-methylsulfanyl-N(6)-dimethylallyladenosine(37) in tRNA + (sulfur carrier)-H + 5'-deoxyadenosine + L-methionine + A + S-adenosyl-L-homocysteine + 2 H(+). Functionally, catalyzes the methylthiolation of N6-(dimethylallyl)adenosine (i(6)A), leading to the formation of 2-methylthio-N6-(dimethylallyl)adenosine (ms(2)i(6)A) at position 37 in tRNAs that read codons beginning with uridine. In Desulfosudis oleivorans (strain DSM 6200 / JCM 39069 / Hxd3) (Desulfococcus oleovorans), this protein is tRNA-2-methylthio-N(6)-dimethylallyladenosine synthase.